The chain runs to 158 residues: Transcriptional repressor NrdR (158 aa).

A zinc finger spans residues 3–34; it reads CPYCGYPDSRVIDSRPTDDNTAIRRRRECLKC. An ATP-cone domain is found at 49-139; sequence ILVIKKDNRR…VYRQFKDINT (91 aa).

The protein belongs to the NrdR family. It depends on Zn(2+) as a cofactor.

In terms of biological role, negatively regulates transcription of bacterial ribonucleotide reductase nrd genes and operons by binding to NrdR-boxes. The protein is Transcriptional repressor NrdR of Caldanaerobacter subterraneus subsp. tengcongensis (strain DSM 15242 / JCM 11007 / NBRC 100824 / MB4) (Thermoanaerobacter tengcongensis).